We begin with the raw amino-acid sequence, 313 residues long: Probable GTP 3',8-cyclase (313 aa).

The Radical SAM core domain occupies 4–224 (RFGRSIEDLR…EIRSKHYRPR (221 aa)). Position 13 (arginine 13) interacts with GTP. [4Fe-4S] cluster contacts are provided by cysteine 20, cysteine 24, and cysteine 27. A GTP-binding site is contributed by lysine 60. An S-adenosyl-L-methionine-binding site is contributed by glycine 64. Position 90 (threonine 90) interacts with GTP. Position 114 (serine 114) interacts with S-adenosyl-L-methionine. Lysine 151 contributes to the GTP binding site. Positions 244 and 247 each coordinate [4Fe-4S] cluster. Position 249–251 (249–251 (RIR)) interacts with GTP. [4Fe-4S] cluster is bound at residue cysteine 261.

This sequence belongs to the radical SAM superfamily. MoaA family. The cofactor is [4Fe-4S] cluster.

It catalyses the reaction GTP + AH2 + S-adenosyl-L-methionine = (8S)-3',8-cyclo-7,8-dihydroguanosine 5'-triphosphate + 5'-deoxyadenosine + L-methionine + A + H(+). It functions in the pathway cofactor biosynthesis; molybdopterin biosynthesis. In terms of biological role, catalyzes the cyclization of GTP to (8S)-3',8-cyclo-7,8-dihydroguanosine 5'-triphosphate. The polypeptide is Probable GTP 3',8-cyclase (Sulfurisphaera tokodaii (strain DSM 16993 / JCM 10545 / NBRC 100140 / 7) (Sulfolobus tokodaii)).